Consider the following 622-residue polypeptide: Neuronal acetylcholine receptor subunit alpha-4 (622 aa).

An N-terminal signal peptide occupies residues 1-23 (MGFLVSKGNLLLLLCASIFPAFG). The Extracellular segment spans residues 24-237 (HVETRAHAEE…ITYSFIIRRL (214 aa)). Asn52 is a glycosylation site (N-linked (GlcNAc...) asparagine). Residues Val71 and Glu73 each coordinate Ca(2+). N-linked (GlcNAc...) asparagine glycosylation occurs at Asn102. 2 disulfides stabilise this stretch: Cys156/Cys170 and Cys220/Cys221. The helical transmembrane segment at 238–262 (PLFYTINLIIPCLLISCLTVLVFYL) threads the bilayer. The S-palmitoyl cysteine moiety is linked to residue Cys266. 2 helical membrane passes run 270 to 288 (ITLCISVLLSLTVFLLLIT) and 304 to 325 (YLLFTMIFVTLSIIITVFVLNV). The Cytoplasmic segment spans residues 326–595 (HHRSPRTHTM…WKYVAMVIDR (270 aa)). 2 disordered regions span residues 380 to 477 (WSET…TEEG) and 497 to 516 (QTNGHSSASPASQRCHLNEE). Low complexity predominate over residues 390-407 (TTSSSPSPQSNEPSPTSS). Composition is skewed to polar residues over residues 450 to 472 (SDTQTTSISKGRSLSVQQMYSPN) and 497 to 508 (QTNGHSSASPAS). The chain crosses the membrane as a helical span at residues 596–614 (IFLWMFIIVCLLGTVGLFL).

Belongs to the ligand-gated ion channel (TC 1.A.9) family. Acetylcholine receptor (TC 1.A.9.1) subfamily. Alpha-4/CHRNA4 sub-subfamily. In terms of assembly, neuronal AChR is composed of two different types of subunits: alpha and beta. CHRNA4 forms heteropentameric neuronal acetylcholine receptors with CHRNB2 and CHRNB4, as well as CHRNA5 and CHRNB3 as accesory subunits. Found in two major stoichiometric forms, LS (low agonist sensitivity): (CHRNA4)3:(CHRNB2)2 and HS (high agonist sensitivity): (CHRNA4)2:(CHRNB2)3, the two stoichiometric forms differ in their unitary conductance, calcium permeability, ACh sensitivity and potentiation by divalent cation. Cells produce predominantly an (CHRNA4)3:(CHRNB2)2 nAChR. The (CHRNA4)2:(CHRNB2)3 expression is selectively up-regulated by nicotine and has lower single channel conductance and calcium permeability. In the striatum, also forms CHRNA4:CHRNA6:CHRNB2 complexes. Also found in the stoichiometric form: (CHRNA4:CHRNB2)2:CHRNB3.

The protein localises to the synaptic cell membrane. The protein resides in the cell membrane. The catalysed reaction is Ca(2+)(in) = Ca(2+)(out). The enzyme catalyses K(+)(in) = K(+)(out). It carries out the reaction Na(+)(in) = Na(+)(out). Activated by a myriad of ligands such as acetylcholine, cytisine, nicotine, choline and epibatidine. Channel potentiation by calcium is stoichiometry-selective, CHRNA4:CHRNB2 nACh receptor is achieved by calcium association with topographically distinct sites framed by anionic residues within the CHRNA4 subunit and between the CHRNA4 and CHRNB2 subunits. nAChR activity is inhibited by the antagonist alpha-conotoxins BuIA, PnIA, GID and MII, small disulfide-constrained peptides from cone snails. In terms of biological role, component of neuronal acetylcholine receptors (nAChRs) that function as pentameric, ligand-gated cation channels with high calcium permeability among other activities. nAChRs are excitatory neurotrasnmitter receptors formed by a collection of nAChR subunits known to mediate synaptic transmission in the nervous system and the neuromuscular junction. Each nAchR subunit confers differential attributes to channel properties, including activation, deactivation and desensitization kinetics, pH sensitivity, cation permeability, and binding to allosteric modulators. CHRNA4 forms heteropentameric neuronal acetylcholine receptors with CHRNB2 and CHRNB4, as well as CHRNA5 and CHRNB3 as accesory subunits. Is the most abundant nAChR subtype expressed in the central nervous system. Found in two major stoichiometric forms,(CHRNA4)3:(CHRNB2)2 and (CHRNA4)2:(CHRNB2)3, the two stoichiometric forms differ in their unitary conductance, calcium permeability, ACh sensitivity and potentiation by divalent cation. Involved in the modulation of calcium-dependent signaling pathways, influences the release of neurotransmitters, including dopamine, glutamate and GABA. This is Neuronal acetylcholine receptor subunit alpha-4 (CHRNA4) from Gallus gallus (Chicken).